A 484-amino-acid polypeptide reads, in one-letter code: Magnesium transporter MRS2-3 (484 aa).

Disordered regions lie at residues M1–K40 and T141–E186. Residues N10–T24 are compositionally biased toward polar residues. Residues A203 to E275 are a coiled coil. Positions L286–E320 are disordered. Acidic residues predominate over residues D298 to D311. Residues G416–F436 form a helical membrane-spanning segment. A Required for magnesium transport activity motif is present at residues G437–N439. The helical transmembrane segment at F455–G475 threads the bilayer.

This sequence belongs to the CorA metal ion transporter (MIT) (TC 1.A.35.5) family. In terms of tissue distribution, expressed in the whole plant.

It localises to the membrane. Magnesium transporter that may mediate the influx of magnesium. This Arabidopsis thaliana (Mouse-ear cress) protein is Magnesium transporter MRS2-3 (MRS2-3).